The sequence spans 248 residues: Phosphomannomutase (248 aa).

Aspartate 12 acts as the Nucleophile in catalysis. Mg(2+) contacts are provided by aspartate 12 and aspartate 14. The active-site Proton donor/acceptor is aspartate 14. Residues arginine 21, arginine 123, arginine 134, arginine 141, serine 179, and aspartate 181 each coordinate alpha-D-mannose 1-phosphate. Positions 207, 219, and 224 each coordinate Mg(2+).

The protein belongs to the eukaryotic PMM family. Homodimer. Mg(2+) serves as cofactor.

The protein localises to the cytoplasm. It carries out the reaction alpha-D-mannose 1-phosphate = D-mannose 6-phosphate. The protein operates within nucleotide-sugar biosynthesis; GDP-alpha-D-mannose biosynthesis; alpha-D-mannose 1-phosphate from D-fructose 6-phosphate: step 2/2. Catalyzes the interconversion of mannose-6-phosphate to mannose-1-phosphate, the precursor for the synthesis of GDP-mannose. GDP-mannose is an essential sugar nucleotide for the synthesis of D-mannose-containing cell wall polysaccharides (galactomannans and glucomannans), glycolipids, glycoproteins and the antioxidant L-ascorbate. The protein is Phosphomannomutase of Spinacia oleracea (Spinach).